Reading from the N-terminus, the 292-residue chain is Retinal homeobox protein Rx3 (292 aa).

The tract at residues 1–27 (MRLVGSQYKDMEDRLSPSARLVRSPGS) is disordered. The Octapeptide motif signature appears at 32–39 (HSIESILG). 2 disordered regions span residues 53 to 72 (GSGK…DSNK) and 85 to 107 (SPDL…KKHR). 2 stretches are compositionally biased toward basic and acidic residues: residues 57-72 (TGKD…DSNK) and 92-102 (DGGKLSDDENP). A DNA-binding region (homeobox) is located at residues 106-165 (HRRNRTTFTTFQLHELERAFEKSHYPDVYSREELALKVNLPEVRVQVWFQNRRAKWRRQE). Residues 272–285 (TSIASLRMKAKEHI) carry the OAR motif. The Nuclear localization signal signature appears at 278-282 (RMKAK).

This sequence belongs to the paired homeobox family. Bicoid subfamily.

The protein localises to the nucleus. In terms of biological role, plays a critical role in eye formation by regulating the initial specification of retinal cells and/or their subsequent proliferation. The sequence is that of Retinal homeobox protein Rx3 (rx3) from Danio rerio (Zebrafish).